Reading from the N-terminus, the 158-residue chain is MAVSDLSHRFEGESVGRALELVGERWTLLILREAFFGVRRFGQLARNLGIPRPTLSSRLRMLVEVGLFDRVPYSSDPERHEYRLTEAGRDLFAAIVVLMQWGDEYLPRPEGPPIKLRHHTCGEHADPRLICTHCGEEITARNVTPEPGPGFKAKLASS.

Residues 13 to 110 enclose the HTH hxlR-type domain; that stretch reads ESVGRALELV…WGDEYLPRPE (98 aa).

This is an uncharacterized protein from Mycobacterium tuberculosis (strain ATCC 25618 / H37Rv).